The following is a 284-amino-acid chain: Tropomyosin-1 (284 aa).

Residues 1–284 (MDGIKKKMIA…DQTFAELTGY (284 aa)) adopt a coiled-coil conformation. The interval 111-131 (TKLEEASKTAEESERGRKDLE) is disordered.

This sequence belongs to the tropomyosin family. Homodimer.

Tropomyosin, in association with the troponin complex, plays a central role in the calcium dependent regulation of muscle contraction. This chain is Tropomyosin-1, found in Schistosoma mansoni (Blood fluke).